Here is a 441-residue protein sequence, read N- to C-terminus: uncharacterized protein (441 aa).

The segment covering 121-143 has biased composition (low complexity); the sequence is TLSPSIVSEQQQQQQQQQQQQQQ. Disordered stretches follow at residues 121–146 and 371–392; these read TLSP…QAIS and SDAD…TAPN. A compositionally biased stretch (polar residues) spans 382–391; sequence PTSAPSTTAP.

This is an uncharacterized protein from Dictyostelium discoideum (Social amoeba).